We begin with the raw amino-acid sequence, 139 residues long: Thioredoxin H-type (139 aa).

Residues 20-132 (ELAGGNVHLI…LHKKITAILD (113 aa)) enclose the Thioredoxin domain. Catalysis depends on nucleophile residues C58 and C61. C58 and C61 are joined by a disulfide.

It is found in the cytoplasm. Functionally, participates in various redox reactions through the reversible oxidation of the active center dithiol to a disulfide. The H form is known to activate a number of cytosolic enzymes. The sequence is that of Thioredoxin H-type from Populus jackii (Balm of Gilead).